A 340-amino-acid polypeptide reads, in one-letter code: MNKWPRIMELIVAFGLIVFKVALLIAILLLLPLPLTWLERKIAGHMQQRMGPMRVGWHGLLQPVADGIKLLTKEDHIPAEADRFLFKLAPILALAPPFVVFVAIPFGETISVRGTEITLYLSNMNVALLFVFAVIGIEVFGVIFGGWAANSKYAVLGSLRTCAQMISYEIPMGFAVIGVVMLAQSMSLLDIVRAQTDVWNIVYQPVGFFVFFVAGLAEAQRIPFDLAEAEGDLGAGFHTEYSGIRFAFFMVSEYVIVLLVSVLLVILFFGGWNGILVPMPPLLWFLLKVAFFVYLFIWFRFTFPRYRYDQLMAIGWKVLLPLSMANIIITGVLLGAAAAP.

8 helical membrane passes run 10–30 (LIVA…ILLL), 84–104 (FLFK…FVAI), 126–146 (VALL…IFGG), 172–192 (MGFA…LDIV), 198–218 (VWNI…GLAE), 255–275 (VIVL…WNGI), 279–299 (MPPL…FIWF), and 318–338 (VLLP…GAAA).

This sequence belongs to the complex I subunit 1 family. As to quaternary structure, NDH-1 is composed of 14 different subunits. Subunits NuoA, H, J, K, L, M, N constitute the membrane sector of the complex.

It localises to the cell inner membrane. The catalysed reaction is a quinone + NADH + 5 H(+)(in) = a quinol + NAD(+) + 4 H(+)(out). Its function is as follows. NDH-1 shuttles electrons from NADH, via FMN and iron-sulfur (Fe-S) centers, to quinones in the respiratory chain. The immediate electron acceptor for the enzyme in this species is believed to be ubiquinone. Couples the redox reaction to proton translocation (for every two electrons transferred, four hydrogen ions are translocated across the cytoplasmic membrane), and thus conserves the redox energy in a proton gradient. This subunit may bind ubiquinone. The chain is NADH-quinone oxidoreductase subunit H 2 from Rhizobium etli (strain ATCC 51251 / DSM 11541 / JCM 21823 / NBRC 15573 / CFN 42).